The chain runs to 444 residues: Exodeoxyribonuclease 7 large subunit (444 aa).

It belongs to the XseA family. As to quaternary structure, heterooligomer composed of large and small subunits.

The protein localises to the cytoplasm. It catalyses the reaction Exonucleolytic cleavage in either 5'- to 3'- or 3'- to 5'-direction to yield nucleoside 5'-phosphates.. In terms of biological role, bidirectionally degrades single-stranded DNA into large acid-insoluble oligonucleotides, which are then degraded further into small acid-soluble oligonucleotides. The chain is Exodeoxyribonuclease 7 large subunit from Pseudoalteromonas translucida (strain TAC 125).